The following is a 384-amino-acid chain: 5-cytosine rRNA methyltransferase NSUN4 (384 aa).

The transit peptide at 1 to 25 directs the protein to the mitochondrion; that stretch reads MAALTLRGVRELLKRVDLATVPRRH. Residues Gly-185, Gly-186, Lys-187, and Asp-204 each contribute to the S-adenosyl-L-methionine site. At Ser-206 the chain carries Phosphoserine. S-adenosyl-L-methionine contacts are provided by Arg-209, Asp-237, Gly-238, and Asp-255. Residue Cys-310 is the Nucleophile of the active site.

Belongs to the class I-like SAM-binding methyltransferase superfamily. RsmB/NOP family. In terms of assembly, heterodimer with MTERFD2/MTERF4; this interaction seems to be required for NSUN4 recruitment to the mitochondrial large ribosomal subunit.

The protein localises to the mitochondrion. It carries out the reaction a cytidine in rRNA + S-adenosyl-L-methionine = a 5-methylcytidine in rRNA + S-adenosyl-L-homocysteine + H(+). The catalysed reaction is a cytidine in mRNA + S-adenosyl-L-methionine = a 5-methylcytidine in mRNA + S-adenosyl-L-homocysteine + H(+). Functionally, mitochondrial RNA cytosine C(5)-methyltransferase that methylates cytosine to 5-methylcytosine (m5C) in various RNAs, such as rRNAs, mRNAs and some long non-coding RNAs (lncRNAs). Involved in mitochondrial ribosome small subunit (SSU) maturation by catalyzing methylation of mitochondrial 12S rRNA; the function is independent of MTERFD2/MTERF4 and assembled mitochondrial ribosome large subunit (LSU). Targeted to LSU by MTERFD2/MTERF4 and probably is involved in a final step in ribosome biogenesis to ensure that SSU and LSU are assembled. In vitro can methylate 16S rRNA of the LSU; the methylation is enhanced by MTERFD/MTERF4. Also acts as a regulator of innate immunity by marking double-stranded mitochondrial RNAs(mt-dsRNAs) generated in response to stress: catalyzes m5C modification on mitochondrial RNAs, such as a mRNAs and lncRNAs, with a preference for the termini of light-strand lncRNAs, promoting their degradation and cytosolic release. Modified light-strand lncRNAs are then recognized by C1QBP reader and recruited to the mitochondrial degradosome complex, which promotes their degradation. The chain is 5-cytosine rRNA methyltransferase NSUN4 from Homo sapiens (Human).